We begin with the raw amino-acid sequence, 72 residues long: MLIPWQDLSPETLENLIESFVLREGTDYGEHERTLEQKVSDVKRQLQCGEAVLVWSELHETVNIMPRSQFRE.

The protein belongs to the UPF0270 family.

This Escherichia coli (strain UTI89 / UPEC) protein is UPF0270 protein YheU.